Consider the following 360-residue polypeptide: Photosystem II protein D1 1 (360 aa).

The next 3 membrane-spanning stretches (helical) occupy residues 29 to 46 (YVGWFGVLMIPTLLTATT), 118 to 133 (HFLIGVFCYMGREWEL), and 142 to 156 (WICVAFSAPVAAATA). H118 contributes to the chlorophyll a binding site. Y126 contacts pheophytin a. D170 and E189 together coordinate [CaMn4O5] cluster. A helical transmembrane segment spans residues 197–218 (FHMLGVAGVFGGSLFSAMHGSL). H198 provides a ligand contact to chlorophyll a. A quinone contacts are provided by residues H215 and 264-265 (SF). Position 215 (H215) interacts with Fe cation. H272 contributes to the Fe cation binding site. Residues 274–288 (FLGAWPVVGIWFTAL) traverse the membrane as a helical segment. [CaMn4O5] cluster contacts are provided by H332, E333, D342, and A344. Positions 345–360 (AGEQAPVALQAPAING) are excised as a propeptide.

It belongs to the reaction center PufL/M/PsbA/D family. In terms of assembly, PSII is composed of 1 copy each of membrane proteins PsbA, PsbB, PsbC, PsbD, PsbE, PsbF, PsbH, PsbI, PsbJ, PsbK, PsbL, PsbM, PsbT, PsbX, PsbY, PsbZ, Psb30/Ycf12, peripheral proteins PsbO, CyanoQ (PsbQ), PsbU, PsbV and a large number of cofactors. It forms dimeric complexes. The D1/D2 heterodimer binds P680, chlorophylls that are the primary electron donor of PSII, and subsequent electron acceptors. It shares a non-heme iron and each subunit binds pheophytin, quinone, additional chlorophylls, carotenoids and lipids. D1 provides most of the ligands for the Mn4-Ca-O5 cluster of the oxygen-evolving complex (OEC). There is also a Cl(-1) ion associated with D1 and D2, which is required for oxygen evolution. The PSII complex binds additional chlorophylls, carotenoids and specific lipids. is required as a cofactor. Post-translationally, tyr-161 forms a radical intermediate that is referred to as redox-active TyrZ, YZ or Y-Z. In terms of processing, C-terminally processed by CtpA; processing is essential to allow assembly of the oxygen-evolving complex and thus photosynthetic growth.

The protein localises to the cellular thylakoid membrane. The enzyme catalyses 2 a plastoquinone + 4 hnu + 2 H2O = 2 a plastoquinol + O2. In terms of biological role, photosystem II (PSII) is a light-driven water:plastoquinone oxidoreductase that uses light energy to abstract electrons from H(2)O, generating O(2) and a proton gradient subsequently used for ATP formation. It consists of a core antenna complex that captures photons, and an electron transfer chain that converts photonic excitation into a charge separation. The D1/D2 (PsbA/PsbD) reaction center heterodimer binds P680, the primary electron donor of PSII as well as several subsequent electron acceptors. This chain is Photosystem II protein D1 1, found in Picosynechococcus sp. (strain ATCC 27264 / PCC 7002 / PR-6) (Agmenellum quadruplicatum).